We begin with the raw amino-acid sequence, 197 residues long: Phosphoheptose isomerase (197 aa).

In terms of domain architecture, SIS spans 34-196 (MVHCLLGGNK…DRTLFPQDEQ (163 aa)). 49–51 (NGG) lines the substrate pocket. The Zn(2+) site is built by histidine 58 and glutamate 62. Residues glutamate 62, 91–92 (ND), 117–119 (STS), serine 122, and glutamine 172 each bind substrate. Zn(2+) is bound by residues glutamine 172 and histidine 180.

This sequence belongs to the SIS family. GmhA subfamily. As to quaternary structure, homotetramer. It depends on Zn(2+) as a cofactor.

Its subcellular location is the cytoplasm. It carries out the reaction 2 D-sedoheptulose 7-phosphate = D-glycero-alpha-D-manno-heptose 7-phosphate + D-glycero-beta-D-manno-heptose 7-phosphate. It participates in carbohydrate biosynthesis; D-glycero-D-manno-heptose 7-phosphate biosynthesis; D-glycero-alpha-D-manno-heptose 7-phosphate and D-glycero-beta-D-manno-heptose 7-phosphate from sedoheptulose 7-phosphate: step 1/1. Its function is as follows. Catalyzes the isomerization of sedoheptulose 7-phosphate in D-glycero-D-manno-heptose 7-phosphate. This chain is Phosphoheptose isomerase, found in Shewanella sp. (strain W3-18-1).